Consider the following 194-residue polypeptide: Peptidyl-tRNA hydrolase (194 aa).

Tyr-17 provides a ligand contact to tRNA. Residue His-22 is the Proton acceptor of the active site. TRNA contacts are provided by Phe-68, Asn-70, and Asn-116.

This sequence belongs to the PTH family. Monomer.

The protein resides in the cytoplasm. It catalyses the reaction an N-acyl-L-alpha-aminoacyl-tRNA + H2O = an N-acyl-L-amino acid + a tRNA + H(+). Its function is as follows. Hydrolyzes ribosome-free peptidyl-tRNAs (with 1 or more amino acids incorporated), which drop off the ribosome during protein synthesis, or as a result of ribosome stalling. Catalyzes the release of premature peptidyl moieties from peptidyl-tRNA molecules trapped in stalled 50S ribosomal subunits, and thus maintains levels of free tRNAs and 50S ribosomes. The sequence is that of Peptidyl-tRNA hydrolase from Haemophilus influenzae (strain 86-028NP).